Here is a 130-residue protein sequence, read N- to C-terminus: Small ribosomal subunit protein uS8 (130 aa).

It belongs to the universal ribosomal protein uS8 family. In terms of assembly, part of the 30S ribosomal subunit. Contacts proteins S5 and S12.

Its function is as follows. One of the primary rRNA binding proteins, it binds directly to 16S rRNA central domain where it helps coordinate assembly of the platform of the 30S subunit. The sequence is that of Small ribosomal subunit protein uS8 from Shewanella halifaxensis (strain HAW-EB4).